Consider the following 378-residue polypeptide: UDP-N-acetylglucosamine 2-epimerase (378 aa).

The active site involves histidine 214.

This sequence belongs to the UDP-N-acetylglucosamine 2-epimerase family.

It catalyses the reaction UDP-N-acetyl-alpha-D-glucosamine = UDP-N-acetyl-alpha-D-mannosamine. The protein operates within bacterial outer membrane biogenesis; LPS O-antigen biosynthesis. The chain is UDP-N-acetylglucosamine 2-epimerase (rfbC) from Salmonella borreze.